A 414-amino-acid polypeptide reads, in one-letter code: Probable indole-3-pyruvate monooxygenase YUCCA1 (414 aa).

FAD is bound at residue Gly25–Gly30. Gly189–Gly194 serves as a coordination point for NADP(+).

Belongs to the FMO family. Requires FAD as cofactor. As to expression, expressed in the apical meristems and young floral primordia. Detected in the floral meristems and at the base of the floral organs.

It catalyses the reaction indole-3-pyruvate + NADPH + O2 + H(+) = (indol-3-yl)acetate + CO2 + NADP(+) + H2O. It participates in plant hormone metabolism; auxin biosynthesis. Its function is as follows. Involved in auxin biosynthesis, but not in the tryptamine or the CYP79B2/B3 branches. Catalyzes in vitro the N-oxidation of tryptamine to form N-hydroxyl tryptamine. Involved during embryogenesis and seedling development. Required for the formation of floral organs and vascular tissues. Belongs to the set of redundant YUCCA genes probably responsible for auxin biosynthesis in shoots. The chain is Probable indole-3-pyruvate monooxygenase YUCCA1 (YUC1) from Arabidopsis thaliana (Mouse-ear cress).